The sequence spans 144 residues: Small ribosomal subunit protein eS12z (144 aa).

Ser-2 bears the N-acetylserine mark.

It belongs to the eukaryotic ribosomal protein eS12 family.

The protein is Small ribosomal subunit protein eS12z (RPS12A) of Arabidopsis thaliana (Mouse-ear cress).